The primary structure comprises 247 residues: ATP synthase subunit a, chloroplastic (247 aa).

Transmembrane regions (helical) follow at residues 38-58, 95-115, 134-154, 199-219, and 220-240; these read QVLI…TIAV, VPFI…GALL, INTT…AGFT, LVVV…VMFL, and GLFT…AYIG.

Belongs to the ATPase A chain family. As to quaternary structure, F-type ATPases have 2 components, CF(1) - the catalytic core - and CF(0) - the membrane proton channel. CF(1) has five subunits: alpha(3), beta(3), gamma(1), delta(1), epsilon(1). CF(0) has four main subunits: a, b, b' and c.

The protein resides in the plastid. It localises to the chloroplast thylakoid membrane. Key component of the proton channel; it plays a direct role in the translocation of protons across the membrane. The chain is ATP synthase subunit a, chloroplastic from Liriodendron tulipifera (Tuliptree).